A 144-amino-acid chain; its full sequence is Glutaredoxin-C6 (144 aa).

One can recognise a Glutaredoxin domain in the interval 39 to 143; it reads EAKIRRLISE…PKLVQVGALW (105 aa). The cysteines at positions 59 and 62 are disulfide-linked.

Belongs to the glutaredoxin family. CC-type subfamily.

The protein resides in the cytoplasm. Functionally, has a glutathione-disulfide oxidoreductase activity in the presence of NADPH and glutathione reductase. Reduces low molecular weight disulfides and proteins. This Arabidopsis thaliana (Mouse-ear cress) protein is Glutaredoxin-C6 (GRXC6).